The sequence spans 710 residues: Exocyst complex component 5 (710 aa).

Residues 44–96 (DTFIQTIKDLKILQEKQQSKCERLEESLRQEKESHAKKIAKLQERHQTAIDVF) are a coiled coil.

This sequence belongs to the SEC10 family. In terms of assembly, the exocyst complex is composed of Sec3/Exoc1, Sec5/Exoc2, Sec6/Exoc3, Sec8/Exoc4, Sec10/Exoc5, Sec15/Exoc6, Exo70/Exoc7 and Exo84/Exoc8.

In terms of biological role, component of the exocyst complex involved in the docking of exocytic vesicles with fusion sites on the plasma membrane. This chain is Exocyst complex component 5, found in Drosophila melanogaster (Fruit fly).